Reading from the N-terminus, the 286-residue chain is Probable endonuclease 4 (286 aa).

Residues His-71, His-111, Glu-147, Asp-181, His-184, His-218, Asp-231, His-233, and Glu-263 each contribute to the Zn(2+) site.

It belongs to the AP endonuclease 2 family. It depends on Zn(2+) as a cofactor.

It catalyses the reaction Endonucleolytic cleavage to 5'-phosphooligonucleotide end-products.. Its function is as follows. Endonuclease IV plays a role in DNA repair. It cleaves phosphodiester bonds at apurinic or apyrimidinic (AP) sites, generating a 3'-hydroxyl group and a 5'-terminal sugar phosphate. The polypeptide is Probable endonuclease 4 (Vibrio cholerae serotype O1 (strain ATCC 39541 / Classical Ogawa 395 / O395)).